The following is a 110-amino-acid chain: Iron-sulfur cluster assembly protein CyaY (110 aa).

It belongs to the frataxin family.

Functionally, involved in iron-sulfur (Fe-S) cluster assembly. May act as a regulator of Fe-S biogenesis. This chain is Iron-sulfur cluster assembly protein CyaY, found in Stutzerimonas stutzeri (strain A1501) (Pseudomonas stutzeri).